The chain runs to 856 residues: V-type proton ATPase subunit a (856 aa).

Residues Met-1–Glu-409 are Cytoplasmic-facing. The chain crosses the membrane as a helical span at residues Val-410–Phe-428. At Gly-429–Asp-430 the chain is on the vacuolar side. A helical transmembrane segment spans residues Phe-431–Trp-447. Residues Glu-448–Ala-460 are Cytoplasmic-facing. Residues Met-461 to Ser-490 traverse the membrane as a helical segment. The Vacuolar portion of the chain corresponds to Met-491–Ser-544. A helical transmembrane segment spans residues Tyr-545–Phe-564. Over Ser-565–Phe-582 the chain is Cytoplasmic. The helical transmembrane segment at Val-583–Lys-603 threads the bilayer. The Vacuolar portion of the chain corresponds to Trp-604–Ile-648. The chain crosses the membrane as a helical span at residues Leu-649–Leu-668. Residues Arg-669–Thr-738 lie on the Cytoplasmic side of the membrane. Positions Val-689–Ala-710 are disordered. Acidic residues predominate over residues Leu-692 to Glu-707. The chain crosses the membrane as a helical span at residues Ile-739 to Gln-763. At Gln-764 to Gly-784 the chain is on the vacuolar side. A helical transmembrane segment spans residues Gly-785–Glu-823. At Ser-824 to Gly-856 the chain is on the cytoplasmic side.

The protein belongs to the V-ATPase 116 kDa subunit family. As to quaternary structure, V-ATPase is a heteromultimeric enzyme composed of a peripheral catalytic V1 complex (components A to H) attached to an integral membrane V0 proton pore complex (components: a, c, c', c'', d, e, f and VOA1).

Its subcellular location is the vacuole membrane. In terms of biological role, subunit of the V0 complex of vacuolar(H+)-ATPase (V-ATPase), a multisubunit enzyme composed of a peripheral complex (V1) that hydrolyzes ATP and a membrane integral complex (V0) that translocates protons. V-ATPase is responsible for acidifying and maintaining the pH of intracellular compartments. The polypeptide is V-type proton ATPase subunit a (vph-1) (Neurospora crassa (strain ATCC 24698 / 74-OR23-1A / CBS 708.71 / DSM 1257 / FGSC 987)).